The primary structure comprises 432 residues: Adenylosuccinate synthetase (432 aa).

Residues 13–19 (GDEGKGK) and 41–43 (GHT) each bind GTP. Residue aspartate 14 is the Proton acceptor of the active site. Residues aspartate 14 and glycine 41 each contribute to the Mg(2+) site. Residues 14 to 17 (DEGK), 39 to 42 (NAGH), threonine 130, arginine 144, glutamine 225, threonine 240, and arginine 304 contribute to the IMP site. Histidine 42 (proton donor) is an active-site residue. 300 to 306 (AVTGRPR) serves as a coordination point for substrate. Residues arginine 306, 332-334 (KLD), and 415-417 (STG) contribute to the GTP site.

This sequence belongs to the adenylosuccinate synthetase family. In terms of assembly, homodimer. It depends on Mg(2+) as a cofactor.

Its subcellular location is the cytoplasm. The enzyme catalyses IMP + L-aspartate + GTP = N(6)-(1,2-dicarboxyethyl)-AMP + GDP + phosphate + 2 H(+). Its pathway is purine metabolism; AMP biosynthesis via de novo pathway; AMP from IMP: step 1/2. In terms of biological role, plays an important role in the de novo pathway of purine nucleotide biosynthesis. Catalyzes the first committed step in the biosynthesis of AMP from IMP. In Haemophilus influenzae (strain PittGG), this protein is Adenylosuccinate synthetase.